A 430-amino-acid chain; its full sequence is Trigger factor (430 aa).

The PPIase FKBP-type domain maps to 157-242; sequence GDLVALETWS…AVEVSEPVLP (86 aa).

It belongs to the FKBP-type PPIase family. Tig subfamily.

The protein resides in the cytoplasm. It carries out the reaction [protein]-peptidylproline (omega=180) = [protein]-peptidylproline (omega=0). In terms of biological role, involved in protein export. Acts as a chaperone by maintaining the newly synthesized protein in an open conformation. Functions as a peptidyl-prolyl cis-trans isomerase. The polypeptide is Trigger factor (Xanthomonas campestris pv. campestris (strain ATCC 33913 / DSM 3586 / NCPPB 528 / LMG 568 / P 25)).